The chain runs to 169 residues: Ribosome maturation factor RimP (169 aa).

This sequence belongs to the RimP family.

It is found in the cytoplasm. Functionally, required for maturation of 30S ribosomal subunits. This Coprothermobacter proteolyticus (strain ATCC 35245 / DSM 5265 / OCM 4 / BT) protein is Ribosome maturation factor RimP.